We begin with the raw amino-acid sequence, 333 residues long: Phenylalanine--tRNA ligase alpha subunit (333 aa).

Residue glutamate 248 participates in Mg(2+) binding.

It belongs to the class-II aminoacyl-tRNA synthetase family. Phe-tRNA synthetase alpha subunit type 1 subfamily. As to quaternary structure, tetramer of two alpha and two beta subunits. It depends on Mg(2+) as a cofactor.

The protein localises to the cytoplasm. It carries out the reaction tRNA(Phe) + L-phenylalanine + ATP = L-phenylalanyl-tRNA(Phe) + AMP + diphosphate + H(+). This chain is Phenylalanine--tRNA ligase alpha subunit, found in Ureaplasma parvum serovar 3 (strain ATCC 27815 / 27 / NCTC 11736).